A 199-amino-acid polypeptide reads, in one-letter code: Superoxide dismutase [Mn] 2 (199 aa).

4 residues coordinate Mn(2+): His-28, His-75, Asp-157, and His-161.

It belongs to the iron/manganese superoxide dismutase family. It depends on Mn(2+) as a cofactor.

It catalyses the reaction 2 superoxide + 2 H(+) = H2O2 + O2. In terms of biological role, destroys superoxide anion radicals which are normally produced within the cells and which are toxic to biological systems. The protein is Superoxide dismutase [Mn] 2 (sod2) of Haloferax volcanii (strain ATCC 29605 / DSM 3757 / JCM 8879 / NBRC 14742 / NCIMB 2012 / VKM B-1768 / DS2) (Halobacterium volcanii).